A 323-amino-acid polypeptide reads, in one-letter code: Aquaporin-4 (323 aa).

The Cytoplasmic segment spans residues 1 to 36 (MSDGAAARRWGKCGPPCSRESIMVAFKGVWTQAFWK). Residues cysteine 13 and cysteine 17 are each lipidated (S-palmitoyl cysteine). Residues 37-57 (AVTAEFLAMLIFVLLSVGSTI) traverse the membrane as a helical segment. The Extracellular segment spans residues 58-69 (NWGGSENPLPVD). The chain crosses the membrane as a helical span at residues 70–89 (MVLISLCFGLSIATMVQCFG). Over 90-93 (HISG) the chain is Cytoplasmic. The segment at residues 94-101 (GHINPAVT) is an intramembrane region (discontinuously helical). An NPA 1 motif is present at residues 97–99 (NPA). The Cytoplasmic segment spans residues 102–115 (VAMVCTRKISIAKS). Position 111 is a phosphoserine; by PKG (serine 111). A helical transmembrane segment spans residues 116 to 136 (VFYITAQCLGAIIGAGILYLV). Over 137–155 (TPPSVVGGLGVTTVHGNLT) the chain is Extracellular. N-linked (GlcNAc...) asparagine glycosylation is present at asparagine 153. A helical membrane pass occupies residues 156–176 (AGHGLLVELIITFQLVFTIFA). The Cytoplasmic portion of the chain corresponds to 177 to 184 (SCDSKRTD). Serine 180 bears the Phosphoserine; by PKC mark. A helical membrane pass occupies residues 185–205 (VTGSVALAIGFSVAIGHLFAI). The Extracellular segment spans residues 206-208 (NYT). An intramembrane region (discontinuously helical) is located at residues 209–222 (GASMNPARSFGPAV). The short motif at 213–215 (NPA) is the NPA 2 element. Residues 223-231 (IMGNWENHW) lie on the Extracellular side of the membrane. The helical transmembrane segment at 232-252 (IYWVGPIIGAVLAGALYEYVF) threads the bilayer. Over 253–323 (CPDVELKRRL…DSSGEVLSSV (71 aa)) the chain is Cytoplasmic. Residues serine 276 and serine 285 each carry the phosphoserine modification. Position 289 is a phosphothreonine (threonine 289). Serine 321 is modified (phosphoserine).

It belongs to the MIP/aquaporin (TC 1.A.8) family. Homotetramer. The tetramers can form oligomeric arrays in membranes. The size of the oligomers differs between tissues and is smaller in skeletal muscle than in brain. Interaction between AQP4 oligomeric arrays in close-by cells can contribute to cell-cell adhesion. Part of a complex containing MLC1, TRPV4, HEPACAM and ATP1B1. Phosphorylation by PKC at Ser-180 promotes internalization from the cell membrane, reducing the conductance by 50%. Phosphorylation by PKG at Ser-111 in response to glutamate increases conductance by 40%. In terms of processing, isoform Long: Palmitoylated on its N-terminal region. Isoform 3: Not palmitoylated. Detected in cerebellum. Detected on pericapillary astrocyte endfeet in cerebellum, and in skeletal muscle. Detected in glial lamellae in the hypothalamus (at protein level). Abundant in mature brain cortex, cerebellum and spinal cord. Highly expressed in the ependymal cell lining the aqueductal system and over the space of the brain in contact with the subarachnoid space. Detected in paraventricular and supraoptic nuclei, the granule cell layer of the dentate gyrus and the Purkinje cell layer in the cerebellum. Only weakly detectable in eye, kidney, intestine, and lung.

The protein localises to the cell membrane. It localises to the basolateral cell membrane. It is found in the endosome membrane. The protein resides in the sarcolemma. Its subcellular location is the cell projection. It carries out the reaction H2O(in) = H2O(out). Its function is as follows. Forms a water-specific channel. Plays an important role in brain water homeostasis and in glymphatic solute transport. Required for a normal rate of water exchange across the blood brain interface. Required for normal levels of cerebrospinal fluid influx into the brain cortex and parenchyma along paravascular spaces that surround penetrating arteries, and for normal drainage of interstitial fluid along paravenous drainage pathways. Thereby, it is required for normal clearance of solutes from the brain interstitial fluid, including soluble beta-amyloid peptides derived from APP. Plays a redundant role in urinary water homeostasis and urinary concentrating ability. The polypeptide is Aquaporin-4 (Aqp4) (Rattus norvegicus (Rat)).